Here is a 401-residue protein sequence, read N- to C-terminus: Argininosuccinate synthase (401 aa).

8–16 lines the ATP pocket; sequence AYSGGLDTS. Y85 serves as a coordination point for L-citrulline. G115 is a binding site for ATP. T117, N121, and D122 together coordinate L-aspartate. N121 is an L-citrulline binding site. Positions 125, 173, 258, and 270 each coordinate L-citrulline.

It belongs to the argininosuccinate synthase family. Type 1 subfamily. In terms of assembly, homotetramer.

The protein localises to the cytoplasm. It carries out the reaction L-citrulline + L-aspartate + ATP = 2-(N(omega)-L-arginino)succinate + AMP + diphosphate + H(+). Its pathway is amino-acid biosynthesis; L-arginine biosynthesis; L-arginine from L-ornithine and carbamoyl phosphate: step 2/3. The polypeptide is Argininosuccinate synthase (Staphylococcus aureus (strain bovine RF122 / ET3-1)).